Consider the following 26-residue polypeptide: Small toxic protein ShoB (26 aa).

Residues 7-24 (LIKRVIKIIIAVLQLILL) form a helical membrane-spanning segment.

It is found in the membrane. In terms of biological role, toxic component of a type I toxin-antitoxin (TA) system. May be a toxic protein; overexpression causes cessation of growth and rapid membrane depolarization. Overexpression induces stress-response and a number of membrane protein genes. The polypeptide is Small toxic protein ShoB (shoB) (Escherichia coli (strain K12)).